Consider the following 471-residue polypeptide: Glutamate--tRNA ligase (471 aa).

Positions Pro-9–Gly-19 match the 'HIGH' region motif. Zn(2+) is bound by residues Cys-98, Cys-100, Cys-125, and His-127. A 'KMSKS' region motif is present at residues Lys-237 to Arg-241. Lys-240 contributes to the ATP binding site.

The protein belongs to the class-I aminoacyl-tRNA synthetase family. Glutamate--tRNA ligase type 1 subfamily. In terms of assembly, monomer. The cofactor is Zn(2+).

The protein localises to the cytoplasm. It catalyses the reaction tRNA(Glu) + L-glutamate + ATP = L-glutamyl-tRNA(Glu) + AMP + diphosphate. Its function is as follows. Catalyzes the attachment of glutamate to tRNA(Glu) in a two-step reaction: glutamate is first activated by ATP to form Glu-AMP and then transferred to the acceptor end of tRNA(Glu). This chain is Glutamate--tRNA ligase, found in Shigella boydii serotype 18 (strain CDC 3083-94 / BS512).